The following is a 482-amino-acid chain: UDP-N-acetylmuramate--L-alanine ligase (482 aa).

119-125 provides a ligand contact to ATP; the sequence is GTHGKTT.

Belongs to the MurCDEF family.

It localises to the cytoplasm. It carries out the reaction UDP-N-acetyl-alpha-D-muramate + L-alanine + ATP = UDP-N-acetyl-alpha-D-muramoyl-L-alanine + ADP + phosphate + H(+). It functions in the pathway cell wall biogenesis; peptidoglycan biosynthesis. In terms of biological role, cell wall formation. The protein is UDP-N-acetylmuramate--L-alanine ligase of Cyanothece sp. (strain PCC 7425 / ATCC 29141).